The chain runs to 469 residues: Cysteine--tRNA ligase (469 aa).

Cys-29 contacts Zn(2+). A 'HIGH' region motif is present at residues 31 to 41 (PTVYNYIHIGN). Zn(2+) is bound by residues Cys-210, His-235, and Glu-239. The 'KMSKS' region motif lies at 267–271 (KMSKS). Residue Lys-270 participates in ATP binding.

The protein belongs to the class-I aminoacyl-tRNA synthetase family. In terms of assembly, monomer. Requires Zn(2+) as cofactor.

It localises to the cytoplasm. The catalysed reaction is tRNA(Cys) + L-cysteine + ATP = L-cysteinyl-tRNA(Cys) + AMP + diphosphate. This Thermosipho melanesiensis (strain DSM 12029 / CIP 104789 / BI429) protein is Cysteine--tRNA ligase.